An 863-amino-acid chain; its full sequence is Alanine--tRNA ligase (863 aa).

Residues His-552, His-556, Cys-654, and His-658 each contribute to the Zn(2+) site.

It belongs to the class-II aminoacyl-tRNA synthetase family. Zn(2+) is required as a cofactor.

It localises to the cytoplasm. The catalysed reaction is tRNA(Ala) + L-alanine + ATP = L-alanyl-tRNA(Ala) + AMP + diphosphate. In terms of biological role, catalyzes the attachment of alanine to tRNA(Ala) in a two-step reaction: alanine is first activated by ATP to form Ala-AMP and then transferred to the acceptor end of tRNA(Ala). Also edits incorrectly charged Ser-tRNA(Ala) and Gly-tRNA(Ala) via its editing domain. This Halorhodospira halophila (strain DSM 244 / SL1) (Ectothiorhodospira halophila (strain DSM 244 / SL1)) protein is Alanine--tRNA ligase.